Here is a 520-residue protein sequence, read N- to C-terminus: EGF domain-specific O-linked N-acetylglucosamine transferase (520 aa).

The first 16 residues, 1–16, serve as a signal peptide directing secretion; that stretch reads MPILPILIGILHLSLA. 3 N-linked (GlcNAc...) asparagine glycosylation sites follow: asparagine 52, asparagine 176, and asparagine 250. Residues 292–294 carry the Required for optimal activity motif; that stretch reads DVE. N-linked (GlcNAc...) asparagine glycosylation occurs at asparagine 479. A Prevents secretion from ER motif is present at residues 517–520; it reads RNEL.

Requires a divalent metal cation as cofactor.

Its subcellular location is the endoplasmic reticulum lumen. It catalyses the reaction L-seryl-[protein] + UDP-N-acetyl-alpha-D-glucosamine = 3-O-(N-acetyl-beta-D-glucosaminyl)-L-seryl-[protein] + UDP + H(+). The catalysed reaction is L-threonyl-[protein] + UDP-N-acetyl-alpha-D-glucosamine = 3-O-(N-acetyl-beta-D-glucosaminyl)-L-threonyl-[protein] + UDP + H(+). Catalyzes the transfer of a single N-acetylglucosamine from UDP-GlcNAc to a serine or threonine residue in extracellular proteins resulting in their modification with a beta-linked N-acetylglucosamine (O-GlcNAc). Specifically glycosylates the Thr residue located between the fifth and sixth conserved cysteines of folded EGF-like domains. Involved in epithelial cell adhesion/interaction with the extracellular matrix by mediating glycosylation of proteins in the secretory pathway, such as Dumpy (Dp). The protein is EGF domain-specific O-linked N-acetylglucosamine transferase (Eogt) of Drosophila melanogaster (Fruit fly).